Consider the following 160-residue polypeptide: 6,7-dimethyl-8-ribityllumazine synthase (160 aa).

5-amino-6-(D-ribitylamino)uracil is bound by residues Trp-28, 59 to 61, and 81 to 83; these read ALE and CVI. Position 86 to 87 (86 to 87) interacts with (2S)-2-hydroxy-3-oxobutyl phosphate; the sequence is ET. His-89 (proton donor) is an active-site residue. Residue Asn-114 participates in 5-amino-6-(D-ribitylamino)uracil binding. Residue Arg-128 participates in (2S)-2-hydroxy-3-oxobutyl phosphate binding.

It belongs to the DMRL synthase family.

The enzyme catalyses (2S)-2-hydroxy-3-oxobutyl phosphate + 5-amino-6-(D-ribitylamino)uracil = 6,7-dimethyl-8-(1-D-ribityl)lumazine + phosphate + 2 H2O + H(+). Its pathway is cofactor biosynthesis; riboflavin biosynthesis; riboflavin from 2-hydroxy-3-oxobutyl phosphate and 5-amino-6-(D-ribitylamino)uracil: step 1/2. Functionally, catalyzes the formation of 6,7-dimethyl-8-ribityllumazine by condensation of 5-amino-6-(D-ribitylamino)uracil with 3,4-dihydroxy-2-butanone 4-phosphate. This is the penultimate step in the biosynthesis of riboflavin. The protein is 6,7-dimethyl-8-ribityllumazine synthase of Corynebacterium jeikeium (strain K411).